We begin with the raw amino-acid sequence, 495 residues long: NADH-ubiquinone oxidoreductase chain 4 (495 aa).

The next 12 membrane-spanning stretches (helical) occupy residues 9–29 (YFNL…LLFI), 39–59 (LIGL…WIQF), 89–109 (ISLF…LVGW), 118–138 (EYII…CMLD), 173–193 (FFLY…LILF), 214–234 (IFLW…VPVH), 245–265 (PTAG…YGFL), 272–292 (FPEA…IAII), 335–355 (ILLM…VGVL), 367–387 (YGGL…FTLA), 413–433 (LVAT…LWLY), and 457–477 (VFIF…PKVF).

Belongs to the complex I subunit 4 family. Complex I is composed of at least 49 different subunits.

The protein localises to the mitochondrion inner membrane. The enzyme catalyses a ubiquinone + NADH + 5 H(+)(in) = a ubiquinol + NAD(+) + 4 H(+)(out). In terms of biological role, core subunit of the mitochondrial membrane respiratory chain NADH dehydrogenase (Complex I) that is believed to belong to the minimal assembly required for catalysis. Complex I functions in the transfer of electrons from NADH to the respiratory chain. The immediate electron acceptor for the enzyme is believed to be ubiquinone. The chain is NADH-ubiquinone oxidoreductase chain 4 (ND4) from Arabidopsis thaliana (Mouse-ear cress).